The chain runs to 436 residues: Trigger factor (436 aa).

A PPIase FKBP-type domain is found at 161–246 (DDQLNIDFVG…VNSVAEPKLP (86 aa)).

Belongs to the FKBP-type PPIase family. Tig subfamily.

The protein localises to the cytoplasm. The enzyme catalyses [protein]-peptidylproline (omega=180) = [protein]-peptidylproline (omega=0). Functionally, involved in protein export. Acts as a chaperone by maintaining the newly synthesized protein in an open conformation. Functions as a peptidyl-prolyl cis-trans isomerase. This Pseudomonas aeruginosa (strain LESB58) protein is Trigger factor.